The sequence spans 279 residues: Elongation factor Ts (279 aa).

The involved in Mg(2+) ion dislocation from EF-Tu stretch occupies residues 80-83 (TDFV).

The protein belongs to the EF-Ts family.

The protein localises to the cytoplasm. In terms of biological role, associates with the EF-Tu.GDP complex and induces the exchange of GDP to GTP. It remains bound to the aminoacyl-tRNA.EF-Tu.GTP complex up to the GTP hydrolysis stage on the ribosome. The sequence is that of Elongation factor Ts from Borreliella afzelii (strain PKo) (Borrelia afzelii).